We begin with the raw amino-acid sequence, 351 residues long: Hydroxymethylglutaryl-CoA synthase (351 aa).

Asp28 contributes to the (3S)-3-hydroxy-3-methylglutaryl-CoA binding site. Glu80 acts as the Proton donor/acceptor in catalysis. 2 residues coordinate (3S)-3-hydroxy-3-methylglutaryl-CoA: Cys112 and Thr153. Cys112 serves as the catalytic Acyl-thioester intermediate. Residue Arg199 coordinates CoA. (3S)-3-hydroxy-3-methylglutaryl-CoA-binding residues include Thr201 and His234. His234 acts as the Proton donor/acceptor in catalysis. Lys239 provides a ligand contact to CoA. (3S)-3-hydroxy-3-methylglutaryl-CoA contacts are provided by Arg243, Asn266, and Ser296.

It belongs to the thiolase-like superfamily. Archaeal HMG-CoA synthase family. In terms of assembly, interacts with acetoacetyl-CoA thiolase that catalyzes the precedent step in the pathway and with a DUF35 protein. The acetoacetyl-CoA thiolase/HMG-CoA synthase complex channels the intermediate via a fused CoA-binding site, which allows for efficient coupling of the endergonic thiolase reaction with the exergonic HMGCS reaction.

It carries out the reaction acetoacetyl-CoA + acetyl-CoA + H2O = (3S)-3-hydroxy-3-methylglutaryl-CoA + CoA + H(+). The protein operates within metabolic intermediate biosynthesis; (R)-mevalonate biosynthesis; (R)-mevalonate from acetyl-CoA: step 2/3. In terms of biological role, catalyzes the condensation of acetyl-CoA with acetoacetyl-CoA to form 3-hydroxy-3-methylglutaryl-CoA (HMG-CoA). Functions in the mevalonate (MVA) pathway leading to isopentenyl diphosphate (IPP), a key precursor for the biosynthesis of isoprenoid compounds that are building blocks of archaeal membrane lipids. The protein is Hydroxymethylglutaryl-CoA synthase of Picrophilus torridus (strain ATCC 700027 / DSM 9790 / JCM 10055 / NBRC 100828 / KAW 2/3).